The chain runs to 295 residues: Tyrosine recombinase XerD (295 aa).

The region spanning 1 to 85 (METIIEEYLR…TIRSFHQFAI (85 aa)) is the Core-binding (CB) domain. The Tyr recombinase domain occupies 106-289 (KLPDVLNVDE…SKSQIRKMYN (184 aa)). Residues arginine 146, lysine 170, histidine 241, arginine 244, and histidine 267 contribute to the active site. Residue tyrosine 276 is the O-(3'-phospho-DNA)-tyrosine intermediate of the active site.

This sequence belongs to the 'phage' integrase family. XerD subfamily. In terms of assembly, forms a cyclic heterotetrameric complex composed of two molecules of XerC and two molecules of XerD.

The protein resides in the cytoplasm. Functionally, site-specific tyrosine recombinase, which acts by catalyzing the cutting and rejoining of the recombining DNA molecules. The XerC-XerD complex is essential to convert dimers of the bacterial chromosome into monomers to permit their segregation at cell division. It also contributes to the segregational stability of plasmids. This Staphylococcus aureus (strain COL) protein is Tyrosine recombinase XerD.